Consider the following 90-residue polypeptide: Probable Fe(2+)-trafficking protein (90 aa).

The protein belongs to the Fe(2+)-trafficking protein family. In terms of assembly, monomer.

Functionally, could be a mediator in iron transactions between iron acquisition and iron-requiring processes, such as synthesis and/or repair of Fe-S clusters in biosynthetic enzymes. The polypeptide is Probable Fe(2+)-trafficking protein (Yersinia enterocolitica serotype O:8 / biotype 1B (strain NCTC 13174 / 8081)).